A 241-amino-acid chain; its full sequence is tRNA pseudouridine synthase A (241 aa).

Asp52 serves as the catalytic Nucleophile. A substrate-binding site is contributed by Tyr111.

This sequence belongs to the tRNA pseudouridine synthase TruA family. As to quaternary structure, homodimer.

It catalyses the reaction uridine(38/39/40) in tRNA = pseudouridine(38/39/40) in tRNA. Its function is as follows. Formation of pseudouridine at positions 38, 39 and 40 in the anticodon stem and loop of transfer RNAs. In Ureaplasma urealyticum serovar 10 (strain ATCC 33699 / Western), this protein is tRNA pseudouridine synthase A.